A 334-amino-acid chain; its full sequence is Holliday junction branch migration complex subunit RuvB (334 aa).

Positions 1–182 (MDERLVSTEA…FGVHARLEYY (182 aa)) are large ATPase domain (RuvB-L). ATP-binding positions include Leu-21, Arg-22, Gly-63, Lys-66, Thr-67, Thr-68, 129–131 (EDF), Arg-172, Tyr-182, and Arg-219. A Mg(2+)-binding site is contributed by Thr-67. Residues 183–253 (EQRDLAHIVS…IAEDALERLQ (71 aa)) are small ATPAse domain (RuvB-S). Positions 256–334 (KLGLDHIDHK…HFQMEVPIRD (79 aa)) are head domain (RuvB-H). Residues Arg-311 and Arg-316 each contribute to the DNA site.

This sequence belongs to the RuvB family. In terms of assembly, homohexamer. Forms an RuvA(8)-RuvB(12)-Holliday junction (HJ) complex. HJ DNA is sandwiched between 2 RuvA tetramers; dsDNA enters through RuvA and exits via RuvB. An RuvB hexamer assembles on each DNA strand where it exits the tetramer. Each RuvB hexamer is contacted by two RuvA subunits (via domain III) on 2 adjacent RuvB subunits; this complex drives branch migration. In the full resolvosome a probable DNA-RuvA(4)-RuvB(12)-RuvC(2) complex forms which resolves the HJ.

The protein localises to the cytoplasm. The catalysed reaction is ATP + H2O = ADP + phosphate + H(+). In terms of biological role, the RuvA-RuvB-RuvC complex processes Holliday junction (HJ) DNA during genetic recombination and DNA repair, while the RuvA-RuvB complex plays an important role in the rescue of blocked DNA replication forks via replication fork reversal (RFR). RuvA specifically binds to HJ cruciform DNA, conferring on it an open structure. The RuvB hexamer acts as an ATP-dependent pump, pulling dsDNA into and through the RuvAB complex. RuvB forms 2 homohexamers on either side of HJ DNA bound by 1 or 2 RuvA tetramers; 4 subunits per hexamer contact DNA at a time. Coordinated motions by a converter formed by DNA-disengaged RuvB subunits stimulates ATP hydrolysis and nucleotide exchange. Immobilization of the converter enables RuvB to convert the ATP-contained energy into a lever motion, pulling 2 nucleotides of DNA out of the RuvA tetramer per ATP hydrolyzed, thus driving DNA branch migration. The RuvB motors rotate together with the DNA substrate, which together with the progressing nucleotide cycle form the mechanistic basis for DNA recombination by continuous HJ branch migration. Branch migration allows RuvC to scan DNA until it finds its consensus sequence, where it cleaves and resolves cruciform DNA. This chain is Holliday junction branch migration complex subunit RuvB, found in Bacillus pumilus (strain SAFR-032).